A 209-amino-acid chain; its full sequence is uncharacterized protein (209 aa).

May influence the expression of the nuc gene. This is an uncharacterized protein from Shigella flexneri.